We begin with the raw amino-acid sequence, 201 residues long: Recombination protein RecR (201 aa).

The C4-type zinc-finger motif lies at 60-75 (CSRCGNVDTVDPCIVC). A Toprim domain is found at 83–178 (SVIIVVEDVS…KITRLAHGVP (96 aa)).

Belongs to the RecR family.

May play a role in DNA repair. It seems to be involved in an RecBC-independent recombinational process of DNA repair. It may act with RecF and RecO. The sequence is that of Recombination protein RecR from Rhizobium johnstonii (strain DSM 114642 / LMG 32736 / 3841) (Rhizobium leguminosarum bv. viciae).